A 305-amino-acid chain; its full sequence is Peroxisome biogenesis factor 2 (305 aa).

The Peroxisomal matrix segment spans residues 1 to 15; it reads MASRKENAKSANRVL. A helical membrane pass occupies residues 16 to 42; that stretch reads RISQLDALELNKALEQLVWSQFTQCFH. The Cytoplasmic portion of the chain corresponds to 43-48; it reads GFKPGL. The chain crosses the membrane as a helical span at residues 49-74; the sequence is LARFEPEVKACLWVFLWRFTIYSKNA. The Peroxisomal matrix portion of the chain corresponds to 75–98; it reads TVGQSVLNIKYKNDFSPNLRYQPP. N6-acetyllysine is present on K84. A helical transmembrane segment spans residues 99 to 125; that stretch reads SKNQKIWYAVCTIGGRWLEERCYDLFR. Residues 126-133 are Cytoplasmic-facing; that stretch reads NHHLASFG. The chain crosses the membrane as a helical span at residues 134-160; it reads KVKQCVNFVIGLLKLGGLINFLIFLQR. The Peroxisomal matrix segment spans residues 161 to 187; sequence GKFATLTERLLGIHSVFCKPQNICEVG. A helical transmembrane segment spans residues 188–211; sequence FEYMNRELLWHGFAEFLIFLLPLI. Topologically, residues 212-305 are cytoplasmic; that stretch reads NVQKLKAKLS…GIEMSEVNAL (94 aa). Residues C244, C247, C259, H261, C264, C267, C280, and C283 each contribute to the Zn(2+) site. The segment at 244–284 adopts an RING-type zinc-finger fold; it reads CALCGEWPTMPHTIGCEHIFCYFCAKSSFLFDVYFTCPKCG.

It belongs to the pex2/pex10/pex12 family. In terms of assembly, component of the PEX2-PEX10-PEX12 retrotranslocation channel, composed of PEX2, PEX10 and PEX12. Forms intramolecular and intermolecular disulfide bonds in response to reactive oxygen species (ROS), promoting higher stability.

It is found in the peroxisome membrane. It carries out the reaction [E2 ubiquitin-conjugating enzyme]-S-ubiquitinyl-L-cysteine + [acceptor protein]-L-cysteine = [E2 ubiquitin-conjugating enzyme]-L-cysteine + [acceptor protein]-S-ubiquitinyl-L-cysteine.. It catalyses the reaction S-ubiquitinyl-[E2 ubiquitin-conjugating enzyme]-L-cysteine + [acceptor protein]-L-lysine = [E2 ubiquitin-conjugating enzyme]-L-cysteine + N(6)-ubiquitinyl-[acceptor protein]-L-lysine.. It participates in protein modification; protein ubiquitination. E3 ubiquitin-protein ligase component of a retrotranslocation channel required for peroxisome organization by mediating export of the PEX5 receptor from peroxisomes to the cytosol, thereby promoting PEX5 recycling. The retrotranslocation channel is composed of PEX2, PEX10 and PEX12; each subunit contributing transmembrane segments that coassemble into an open channel that specifically allows the passage of PEX5 through the peroxisomal membrane. PEX2 also regulates peroxisome organization by acting as a E3 ubiquitin-protein ligase. PEX2 ubiquitinates PEX5 during its passage through the retrotranslocation channel: catalyzes monoubiquitination of PEX5 at 'Cys-11', a modification that acts as a signal for PEX5 extraction into the cytosol. Required for pexophagy in response to starvation by mediating ubiquitination of peroxisomal proteins, such as PEX5 and ABCD3/PMP70. Also involved in the response to reactive oxygen species (ROS) by mediating 'Lys-48'-linked polyubiquitination and subsequent degradation of PNPLA2/ATGL, thereby regulating lipolysis. This chain is Peroxisome biogenesis factor 2, found in Homo sapiens (Human).